We begin with the raw amino-acid sequence, 300 residues long: tRNA pseudouridine synthase B (300 aa).

Aspartate 38 functions as the Nucleophile in the catalytic mechanism.

The protein belongs to the pseudouridine synthase TruB family. Type 1 subfamily.

It carries out the reaction uridine(55) in tRNA = pseudouridine(55) in tRNA. Functionally, responsible for synthesis of pseudouridine from uracil-55 in the psi GC loop of transfer RNAs. The protein is tRNA pseudouridine synthase B of Dehalococcoides mccartyi (strain CBDB1).